An 814-amino-acid polypeptide reads, in one-letter code: S-layer protein sap (814 aa).

Residues 1–29 form the signal peptide; that stretch reads MAKTNSYKKVIAGTMTAAMVAGVVSPVAA. SLH domains are found at residues 30 to 93, 94 to 150, and 152 to 214; these read AGKT…DAKP, SFAD…KVNG, and PATK…AAKV. The BIG2 domain maps to 403–479; that stretch reads FTSKDFKQNN…TVKDSKGKEL (77 aa).

Post-translationally, probably glycosylated.

Its subcellular location is the secreted. The protein resides in the cell wall. The protein localises to the S-layer. Functionally, the S-layer is a paracrystalline mono-layered assembly of proteins which coat the surface of bacteria. The polypeptide is S-layer protein sap (sap) (Bacillus anthracis).